Consider the following 737-residue polypeptide: Phosphoribosylformylglycinamidine synthase subunit PurL (737 aa).

Residue His50 is part of the active site. ATP is bound by residues Tyr53 and Lys92. Mg(2+) is bound at residue Glu94. Substrate is bound by residues 95-98 (SHNH) and Arg117. The Proton acceptor role is filled by His96. Asp118 contributes to the Mg(2+) binding site. Gln241 contacts substrate. Asp269 is a binding site for Mg(2+). A substrate-binding site is contributed by 313-315 (ESQ). Residues Asp494 and Gly531 each contribute to the ATP site. Asn532 serves as a coordination point for Mg(2+). Ser534 contacts substrate.

This sequence belongs to the FGAMS family. Monomer. Part of the FGAM synthase complex composed of 1 PurL, 1 PurQ and 2 PurS subunits.

It is found in the cytoplasm. It carries out the reaction N(2)-formyl-N(1)-(5-phospho-beta-D-ribosyl)glycinamide + L-glutamine + ATP + H2O = 2-formamido-N(1)-(5-O-phospho-beta-D-ribosyl)acetamidine + L-glutamate + ADP + phosphate + H(+). The protein operates within purine metabolism; IMP biosynthesis via de novo pathway; 5-amino-1-(5-phospho-D-ribosyl)imidazole from N(2)-formyl-N(1)-(5-phospho-D-ribosyl)glycinamide: step 1/2. Functionally, part of the phosphoribosylformylglycinamidine synthase complex involved in the purines biosynthetic pathway. Catalyzes the ATP-dependent conversion of formylglycinamide ribonucleotide (FGAR) and glutamine to yield formylglycinamidine ribonucleotide (FGAM) and glutamate. The FGAM synthase complex is composed of three subunits. PurQ produces an ammonia molecule by converting glutamine to glutamate. PurL transfers the ammonia molecule to FGAR to form FGAM in an ATP-dependent manner. PurS interacts with PurQ and PurL and is thought to assist in the transfer of the ammonia molecule from PurQ to PurL. In Nitrobacter winogradskyi (strain ATCC 25391 / DSM 10237 / CIP 104748 / NCIMB 11846 / Nb-255), this protein is Phosphoribosylformylglycinamidine synthase subunit PurL.